An 89-amino-acid polypeptide reads, in one-letter code: UPF0147 protein Msed_2034 (89 aa).

It belongs to the UPF0147 family.

This is UPF0147 protein Msed_2034 from Metallosphaera sedula (strain ATCC 51363 / DSM 5348 / JCM 9185 / NBRC 15509 / TH2).